We begin with the raw amino-acid sequence, 192 residues long: Interleukin-18 (192 aa).

Positions 1-35 (MAAEPVEDNCISFVEMKFINNTLYFVAENGDLESD) are excised as a propeptide.

This sequence belongs to the IL-1 family. Forms a ternary complex with ligand-binding receptor subunit IL18R1 and signaling receptor subunit IL18RAP at the plasma membrane. Mature IL18 first binds to IL18R1 forming a low affinity binary complex, which then interacts with IL18RAP to form a high affinity ternary complex that signals inside the cell. Interacts with cargo receptor TMED10; the interaction mediates the translocation from the cytoplasm into the ERGIC (endoplasmic reticulum-Golgi intermediate compartment) and thereby secretion. In terms of processing, the pro-IL-18 precursor is processed by CASP1, CASP4 or CASP5 to yield its mature, active form. The pro-IL-18 precursor features autoinhibitory interactions between the propeptide and the post-cleavage-site region, preventing recognition by the IL18R1 receptor. Processing by CASP1, CASP4 or CASP5 induces conformational changes to generate critical receptor-binding sites. The mature form is then secreted and released in the extracellular milieu by passing through the gasdermin-D (GSDMD) pore. In contrast, cleavage by CASP3 inactivates IL18.

The protein resides in the cytoplasm. Its subcellular location is the cytosol. The protein localises to the secreted. In terms of biological role, pro-inflammatory cytokine primarily involved in epithelial barrier repair, polarized T-helper 1 (Th1) cell and natural killer (NK) cell immune responses. Upon binding to IL18R1 and IL18RAP, forms a signaling ternary complex which activates NF-kappa-B, triggering synthesis of inflammatory mediators. Synergizes with IL12/interleukin-12 to induce IFNG synthesis from T-helper 1 (Th1) cells and natural killer (NK) cells. Involved in transduction of inflammation downstream of pyroptosis: its mature form is specifically released in the extracellular milieu by passing through the gasdermin-D (GSDMD) pore. The polypeptide is Interleukin-18 (IL18) (Capra hircus (Goat)).